The chain runs to 128 residues: Large ribosomal subunit protein bL12 (128 aa).

The interval 97–128 (GAPSTLKEGVSKEDAEEAKKQLTEAGATVEVK) is disordered. Residues 105 to 118 (GVSKEDAEEAKKQL) show a composition bias toward basic and acidic residues.

This sequence belongs to the bacterial ribosomal protein bL12 family. In terms of assembly, homodimer. Part of the ribosomal stalk of the 50S ribosomal subunit. Forms a multimeric L10(L12)X complex, where L10 forms an elongated spine to which 2 to 4 L12 dimers bind in a sequential fashion. Binds GTP-bound translation factors.

Forms part of the ribosomal stalk which helps the ribosome interact with GTP-bound translation factors. Is thus essential for accurate translation. The polypeptide is Large ribosomal subunit protein bL12 (Lawsonia intracellularis (strain PHE/MN1-00)).